Reading from the N-terminus, the 391-residue chain is Succinate--CoA ligase [ADP-forming] subunit beta (391 aa).

Residues 9–247 (KDILAKYGVA…IAEEDPLEVE (239 aa)) form the ATP-grasp domain. ATP-binding positions include Lys49, 56–58 (GRG), Glu102, Ala105, and Glu110. Mg(2+)-binding residues include Asn202 and Asp216. Substrate-binding positions include Asn267 and 324–326 (GIL).

The protein belongs to the succinate/malate CoA ligase beta subunit family. Heterotetramer of two alpha and two beta subunits. Requires Mg(2+) as cofactor.

It catalyses the reaction succinate + ATP + CoA = succinyl-CoA + ADP + phosphate. It carries out the reaction GTP + succinate + CoA = succinyl-CoA + GDP + phosphate. Its pathway is carbohydrate metabolism; tricarboxylic acid cycle; succinate from succinyl-CoA (ligase route): step 1/1. In terms of biological role, succinyl-CoA synthetase functions in the citric acid cycle (TCA), coupling the hydrolysis of succinyl-CoA to the synthesis of either ATP or GTP and thus represents the only step of substrate-level phosphorylation in the TCA. The beta subunit provides nucleotide specificity of the enzyme and binds the substrate succinate, while the binding sites for coenzyme A and phosphate are found in the alpha subunit. The polypeptide is Succinate--CoA ligase [ADP-forming] subunit beta (Acidobacterium capsulatum (strain ATCC 51196 / DSM 11244 / BCRC 80197 / JCM 7670 / NBRC 15755 / NCIMB 13165 / 161)).